The primary structure comprises 859 residues: MACRWSTKESPRWRSALLLLFLAGVYGNGALAEHSENVHISGVSTACGETPEQIRAPSGIITSPGWPSEYPAKINCSWFIRANPGEIITISFQDFDIQGSRRCNLDWLTIETYKNIESYRACGSTIPPPYISSQDHIWIRFHSDDNISRKGFRLAYFSGKSEEPNCACDQFRCGNGKCIPEAWKCNNMDECGDSSDEEICAKEANPPTAAAFQPCAYNQFQCLSRFTKVYTCLPESLKCDGNIDCLDLGDEIDCDVPTCGQWLKYFYGTFNSPNYPDFYPPGSNCTWLIDTGDHRKVILRFTDFKLDGTGYGDYVKIYDGLEENPHKLLRVLTAFDSHAPLTVVSSSGQIRVHFCADKVNAARGFNATYQVDGFCLPWEIPCGGNWGCYTEQQRCDGYWHCPNGRDETNCTMCQKEEFPCSRNGVCYPRSDRCNYQNHCPNGSDEKNCFFCQPGNFHCKNNRCVFESWVCDSQDDCGDGSDEENCPVIVPTRVITAAVIGSLICGLLLVIALGCTCKLYSLRMFERRSFETQLSRVEAELLRREAPPSYGQLIAQGLIPPVEDFPVCSPNQASVLENLRLAVRSQLGFTSVRLPMAGRSSNIWNRIFNFARSRHSGSLALVSADGDEVVPSQSTSREPERNHTHRSLFSVESDDTDTENERRDMAGASGGVAAPLPQKVPPTTAVEATVGACASSSTQSTRGGHADNGRDVTSVEPPSVSPARHQLTSALSRMTQGLRWVRFTLGRSSSLSQNQSPLRQLDNGVSGREDDDDVEMLIPISDGSSDFDVNDCSRPLLDLASDQGQGLRQPYNATNPGVRPSNRDGPCERCGIVHTAQIPDTCLEVTLKNETSDDEALLLC.

A signal peptide spans 1-32 (MACRWSTKESPRWRSALLLLFLAGVYGNGALA). The Extracellular segment spans residues 33–492 (EHSENVHISG…ENCPVIVPTR (460 aa)). 2 cysteine pairs are disulfide-bonded: C47-C76 and C103-C122. Residues 47-159 (CGETPEQIRA…KGFRLAYFSG (113 aa)) enclose the CUB 1 domain. A glycan (N-linked (GlcNAc...) asparagine) is linked at N75. N146 carries N-linked (GlcNAc...) asparagine glycosylation. 2 consecutive LDL-receptor class A domains span residues 165 to 201 (NCAC…EICA) and 214 to 255 (PCAY…IDCD). Disulfide bonds link C166/C178, C173/C191, C185/C200, C215/C232, C222/C245, C239/C254, and C259/C285. Positions 259–372 (CGQWLKYFYG…RGFNATYQVD (114 aa)) constitute a CUB 2 domain. N-linked (GlcNAc...) asparagine glycosylation is found at N284 and N366. 3 LDL-receptor class A domains span residues 374–411 (FCLP…TNCT), 412–449 (MCQK…KNCF), and 450–486 (FCQP…ENCP). Cystine bridges form between C375–C388, C382–C401, C395–C410, C413–C426, C420–C439, C433–C448, C451–C463, C458–C476, and C470–C485. N409 carries N-linked (GlcNAc...) asparagine glycosylation. N441 carries an N-linked (GlcNAc...) asparagine glycan. The helical transmembrane segment at 493–513 (VITAAVIGSLICGLLLVIALG) threads the bilayer. The Cytoplasmic segment spans residues 514 to 859 (CTCKLYSLRM…TSDDEALLLC (346 aa)). 4 disordered regions span residues 623–678 (ADGD…LPQK), 693–723 (ASSS…SPAR), 748–770 (SSLS…REDD), and 801–823 (DQGQ…SNRD). 2 stretches are compositionally biased toward polar residues: residues 748–757 (SSLSQNQSPL) and 801–814 (DQGQ…NATN).

It belongs to the LDLR family. In terms of assembly, may interact with RACK1, ZFYVE9 and NMRK2. As to expression, widely expressed in heart, skeletal muscle, brain, lung, placenta and pancreas, but not in tissues consisting of a large number of epithelial cells, such as liver and kidney. Expressed at very low levels in a number of tumor-derived cell lines.

It is found in the membrane. The protein localises to the coated pit. Probable receptor, which may be involved in the internalization of lipophilic molecules and/or signal transduction. May act as a tumor suppressor. The polypeptide is Low-density lipoprotein receptor-related protein 12 (LRP12) (Homo sapiens (Human)).